Consider the following 131-residue polypeptide: Small ribosomal subunit protein uS9 (131 aa).

It belongs to the universal ribosomal protein uS9 family.

This is Small ribosomal subunit protein uS9 from Mannheimia succiniciproducens (strain KCTC 0769BP / MBEL55E).